A 597-amino-acid chain; its full sequence is Arginine--tRNA ligase (597 aa).

The 'HIGH' region motif lies at 125–135; it reads PNTNKPLHLGH.

The protein belongs to the class-I aminoacyl-tRNA synthetase family. In terms of assembly, monomer.

The protein localises to the cytoplasm. The catalysed reaction is tRNA(Arg) + L-arginine + ATP = L-arginyl-tRNA(Arg) + AMP + diphosphate. This chain is Arginine--tRNA ligase, found in Bacteroides thetaiotaomicron (strain ATCC 29148 / DSM 2079 / JCM 5827 / CCUG 10774 / NCTC 10582 / VPI-5482 / E50).